Reading from the N-terminus, the 61-residue chain is Large ribosomal subunit protein eL37 (61 aa).

Zn(2+)-binding residues include Cys-19, Cys-22, Cys-34, and Cys-37. A C4-type zinc finger spans residues 19–37; sequence CRRCGRNSFNARKGYCAAC.

Belongs to the eukaryotic ribosomal protein eL37 family. The cofactor is Zn(2+).

Its function is as follows. Binds to the 23S rRNA. This is Large ribosomal subunit protein eL37 from Sulfolobus acidocaldarius (strain ATCC 33909 / DSM 639 / JCM 8929 / NBRC 15157 / NCIMB 11770).